We begin with the raw amino-acid sequence, 456 residues long: Tyrosine phenol-lyase (456 aa).

At Lys257 the chain carries N6-(pyridoxal phosphate)lysine.

It belongs to the beta-eliminating lyase family. In terms of assembly, homotetramer. It depends on pyridoxal 5'-phosphate as a cofactor.

The catalysed reaction is L-tyrosine + H2O = phenol + pyruvate + NH4(+). The protein is Tyrosine phenol-lyase (tpl) of Citrobacter intermedius (Escherichia intermedia).